The primary structure comprises 363 residues: Glutamate 5-kinase (363 aa).

An ATP-binding site is contributed by Lys-6. Positions 46, 133, and 145 each coordinate substrate. ATP-binding positions include 165–166 (TD) and 207–213 (TGGMHTK). The region spanning 271-349 (TGRLLLDEGA…RDIEAVLGFT (79 aa)) is the PUA domain.

This sequence belongs to the glutamate 5-kinase family.

The protein resides in the cytoplasm. It carries out the reaction L-glutamate + ATP = L-glutamyl 5-phosphate + ADP. Its pathway is amino-acid biosynthesis; L-proline biosynthesis; L-glutamate 5-semialdehyde from L-glutamate: step 1/2. In terms of biological role, catalyzes the transfer of a phosphate group to glutamate to form L-glutamate 5-phosphate. The polypeptide is Glutamate 5-kinase (Deinococcus geothermalis (strain DSM 11300 / CIP 105573 / AG-3a)).